Consider the following 111-residue polypeptide: Large ribosomal subunit protein uL23 (111 aa).

The protein belongs to the universal ribosomal protein uL23 family. As to quaternary structure, part of the 50S ribosomal subunit. Contacts protein L29, and trigger factor when it is bound to the ribosome.

One of the early assembly proteins it binds 23S rRNA. One of the proteins that surrounds the polypeptide exit tunnel on the outside of the ribosome. Forms the main docking site for trigger factor binding to the ribosome. The protein is Large ribosomal subunit protein uL23 of Chlamydia felis (strain Fe/C-56) (Chlamydophila felis).